The sequence spans 93 residues: M-zodatoxin-Lt5a (93 aa).

The N-terminal stretch at 1–22 is a signal peptide; that stretch reads MKYCVVILALLVALVCITESRS. Residues 23 to 64 constitute a propeptide that is removed on maturation; that stretch reads TETGYAVAETLEDNDLDELQAYLEEIAEASEMEDFSNIEEAR. The Processing quadruplet motif motif lies at 61–64; sequence EEAR. Leu92 carries the post-translational modification Leucine amide.

Cleavage of the propeptide depends on the processing quadruplet motif (XXXR, with at least one of X being E). As to expression, expressed by the venom gland.

The protein resides in the secreted. Has antimicrobial activity against. Gram-positive bacteria (A.globiformis VKM Ac-1112 (MIC=1.1 uM), and B.subtilis VKM B-501 (MIC=0.6 uM)), Gram-negative bacteria (E.coli DH5-alpha (MIC=0.6 uM), E.coli MH1 (MIC=0.6 uM), and P.aeruginosa PAO1 (MIC=18 uM)), and yeasts (P.pastoris GS115 (MIC&gt;37 uM), and S.cerevisiae Y190 (MIC&gt;37 uM)). Also has a moderate hemolytic activity against rabbit erythrocytes. Causes paralysis, but is not lethal when injected into insect (M.domestica) larvae. The sequence is that of M-zodatoxin-Lt5a from Lachesana tarabaevi (Spider).